Consider the following 60-residue polypeptide: Large ribosomal subunit protein bL32 (60 aa).

The protein belongs to the bacterial ribosomal protein bL32 family.

This Streptococcus pneumoniae serotype 19F (strain G54) protein is Large ribosomal subunit protein bL32.